The following is a 459-amino-acid chain: Putrescine aminotransferase (459 aa).

Pyridoxal 5'-phosphate contacts are provided by residues 150–151 (GT) and glutamine 274. N6-(pyridoxal phosphate)lysine is present on lysine 300. Position 332 (threonine 332) interacts with pyridoxal 5'-phosphate.

The protein belongs to the class-III pyridoxal-phosphate-dependent aminotransferase family. Putrescine aminotransferase subfamily. Requires pyridoxal 5'-phosphate as cofactor.

It carries out the reaction an alkane-alpha,omega-diamine + 2-oxoglutarate = an omega-aminoaldehyde + L-glutamate. The catalysed reaction is putrescine + 2-oxoglutarate = 1-pyrroline + L-glutamate + H2O. The enzyme catalyses cadaverine + 2-oxoglutarate = 5-aminopentanal + L-glutamate. It participates in amine and polyamine degradation; putrescine degradation; 4-aminobutanal from putrescine (transaminase route): step 1/1. Catalyzes the aminotransferase reaction from putrescine to 2-oxoglutarate, leading to glutamate and 4-aminobutanal, which spontaneously cyclizes to form 1-pyrroline. This is the first step in one of two pathways for putrescine degradation, where putrescine is converted into 4-aminobutanoate (gamma-aminobutyrate or GABA) via 4-aminobutanal. Also functions as a cadaverine transaminase in a a L-lysine degradation pathway to succinate that proceeds via cadaverine, glutarate and L-2-hydroxyglutarate. This Escherichia coli (strain K12 / MC4100 / BW2952) protein is Putrescine aminotransferase.